Consider the following 115-residue polypeptide: NADH-ubiquinone oxidoreductase chain 3 (115 aa).

3 helical membrane-spanning segments follow: residues 5 to 25 (LTLM…FWLP), 55 to 75 (FFLV…LLPL), and 86 to 106 (LMLT…AYEW).

It belongs to the complex I subunit 3 family. Core subunit of respiratory chain NADH dehydrogenase (Complex I) which is composed of 45 different subunits. Interacts with TMEM186. Interacts with TMEM242.

Its subcellular location is the mitochondrion inner membrane. The enzyme catalyses a ubiquinone + NADH + 5 H(+)(in) = a ubiquinol + NAD(+) + 4 H(+)(out). Core subunit of the mitochondrial membrane respiratory chain NADH dehydrogenase (Complex I) which catalyzes electron transfer from NADH through the respiratory chain, using ubiquinone as an electron acceptor. Essential for the catalytic activity of complex I. The chain is NADH-ubiquinone oxidoreductase chain 3 from Avahi cleesei (Cleese's woolly lemur).